Here is a 264-residue protein sequence, read N- to C-terminus: MVESKLMIADRSFASRLIMGTGGASNLAVLQEALVASGTELTTVAIRRVDAEGGTGLLDLLNRLGITPLPNTAGCRSAAEAVLTAQLAREALATNWVKLEVIADERTLLPDAIELVRAAEQLVDDGFVVLPYTNDDPVLARRLEDTGCAAVMPLGSPIGTGLGITNPHNIEMIVASAGVPVVLDAGIGTASDAALAMELGCDALLLATAVTRAADPAAMAAAMSAAVTAGYLARCAGRIPKRFWAQASSPTLVTTQSPGAESGN.

The Schiff-base intermediate with DXP role is filled by Lys98. Residues Gly159, 185 to 186 (AG), and 207 to 208 (AT) each bind 1-deoxy-D-xylulose 5-phosphate.

This sequence belongs to the ThiG family. In terms of assembly, homotetramer. Forms heterodimers with either ThiH or ThiS.

The protein localises to the cytoplasm. It carries out the reaction [ThiS sulfur-carrier protein]-C-terminal-Gly-aminoethanethioate + 2-iminoacetate + 1-deoxy-D-xylulose 5-phosphate = [ThiS sulfur-carrier protein]-C-terminal Gly-Gly + 2-[(2R,5Z)-2-carboxy-4-methylthiazol-5(2H)-ylidene]ethyl phosphate + 2 H2O + H(+). The protein operates within cofactor biosynthesis; thiamine diphosphate biosynthesis. In terms of biological role, catalyzes the rearrangement of 1-deoxy-D-xylulose 5-phosphate (DXP) to produce the thiazole phosphate moiety of thiamine. Sulfur is provided by the thiocarboxylate moiety of the carrier protein ThiS. In vitro, sulfur can be provided by H(2)S. In Mycobacterium ulcerans (strain Agy99), this protein is Thiazole synthase.